Reading from the N-terminus, the 555-residue chain is Formate--tetrahydrofolate ligase (555 aa).

Residue 64 to 71 (TPAGEGKT) participates in ATP binding.

It belongs to the formate--tetrahydrofolate ligase family.

It catalyses the reaction (6S)-5,6,7,8-tetrahydrofolate + formate + ATP = (6R)-10-formyltetrahydrofolate + ADP + phosphate. It functions in the pathway one-carbon metabolism; tetrahydrofolate interconversion. The chain is Formate--tetrahydrofolate ligase from Allorhizobium ampelinum (strain ATCC BAA-846 / DSM 112012 / S4) (Agrobacterium vitis (strain S4)).